The primary structure comprises 295 residues: Ribosomal RNA small subunit methyltransferase A (295 aa).

S-adenosyl-L-methionine contacts are provided by Asn33, Val35, Gly60, Glu81, Asp111, and Asn129.

It belongs to the class I-like SAM-binding methyltransferase superfamily. rRNA adenine N(6)-methyltransferase family. RsmA subfamily.

It is found in the cytoplasm. The catalysed reaction is adenosine(1518)/adenosine(1519) in 16S rRNA + 4 S-adenosyl-L-methionine = N(6)-dimethyladenosine(1518)/N(6)-dimethyladenosine(1519) in 16S rRNA + 4 S-adenosyl-L-homocysteine + 4 H(+). Functionally, specifically dimethylates two adjacent adenosines (A1518 and A1519) in the loop of a conserved hairpin near the 3'-end of 16S rRNA in the 30S particle. May play a critical role in biogenesis of 30S subunits. This Streptomyces avermitilis (strain ATCC 31267 / DSM 46492 / JCM 5070 / NBRC 14893 / NCIMB 12804 / NRRL 8165 / MA-4680) protein is Ribosomal RNA small subunit methyltransferase A.